The following is a 216-amino-acid chain: Large ribosomal subunit protein bL25 (216 aa).

Disordered regions lie at residues methionine 1–arginine 21 and serine 192–aspartate 216. The segment covering asparagine 195–aspartate 216 has biased composition (basic and acidic residues).

Belongs to the bacterial ribosomal protein bL25 family. CTC subfamily. Part of the 50S ribosomal subunit; part of the 5S rRNA/L5/L18/L25 subcomplex. Contacts the 5S rRNA. Binds to the 5S rRNA independently of L5 and L18.

Functionally, this is one of the proteins that binds to the 5S RNA in the ribosome where it forms part of the central protuberance. In Parvibaculum lavamentivorans (strain DS-1 / DSM 13023 / NCIMB 13966), this protein is Large ribosomal subunit protein bL25.